Here is a 403-residue protein sequence, read N- to C-terminus: Histidine--tRNA ligase (403 aa).

It belongs to the class-II aminoacyl-tRNA synthetase family. Homodimer.

Its subcellular location is the cytoplasm. It carries out the reaction tRNA(His) + L-histidine + ATP = L-histidyl-tRNA(His) + AMP + diphosphate + H(+). This Sulfurovum sp. (strain NBC37-1) protein is Histidine--tRNA ligase.